A 298-amino-acid polypeptide reads, in one-letter code: uncharacterized protein (298 aa).

In terms of domain architecture, HTH araC/xylS-type spans 194–295 (KRLNTALIAI…QLSPSQYRKS (102 aa)). 2 DNA-binding regions (H-T-H motif) span residues 214–235 (EQLAELATMSRANFIRIFQQHI) and 262–285 (VLAIALEVGYQSEAHFCKVFKNYY).

This is an uncharacterized protein from Haemophilus influenzae (strain ATCC 51907 / DSM 11121 / KW20 / Rd).